Here is a 910-residue protein sequence, read N- to C-terminus: Alanine--tRNA ligase (910 aa).

Positions 488–505 are enriched in basic and acidic residues; it reads RHEEKKEDSKSEKGENTA. The interval 488–507 is disordered; it reads RHEEKKEDSKSEKGENTAEK. His614, His618, Cys718, and His722 together coordinate Zn(2+).

Belongs to the class-II aminoacyl-tRNA synthetase family. The cofactor is Zn(2+).

It is found in the cytoplasm. It carries out the reaction tRNA(Ala) + L-alanine + ATP = L-alanyl-tRNA(Ala) + AMP + diphosphate. Functionally, catalyzes the attachment of alanine to tRNA(Ala) in a two-step reaction: alanine is first activated by ATP to form Ala-AMP and then transferred to the acceptor end of tRNA(Ala). Also edits incorrectly charged Ser-tRNA(Ala) and Gly-tRNA(Ala) via its editing domain. The protein is Alanine--tRNA ligase of Methanococcus aeolicus (strain ATCC BAA-1280 / DSM 17508 / OCM 812 / Nankai-3).